The following is a 283-amino-acid chain: Glutamate racemase (283 aa).

Residues 13-14 and 45-46 each bind substrate; these read DS and YG. Cys-76 (proton donor/acceptor) is an active-site residue. 77 to 78 contributes to the substrate binding site; that stretch reads NT. Catalysis depends on Cys-186, which acts as the Proton donor/acceptor. A substrate-binding site is contributed by 187–188; it reads TH.

This sequence belongs to the aspartate/glutamate racemases family.

It catalyses the reaction L-glutamate = D-glutamate. Its pathway is cell wall biogenesis; peptidoglycan biosynthesis. In terms of biological role, provides the (R)-glutamate required for cell wall biosynthesis. The protein is Glutamate racemase of Microcystis aeruginosa (strain NIES-843 / IAM M-2473).